The sequence spans 306 residues: Pantothenate kinase (306 aa).

Position 90–97 (90–97 (GSVAVGKS)) interacts with ATP.

It belongs to the prokaryotic pantothenate kinase family.

The protein resides in the cytoplasm. The enzyme catalyses (R)-pantothenate + ATP = (R)-4'-phosphopantothenate + ADP + H(+). The protein operates within cofactor biosynthesis; coenzyme A biosynthesis; CoA from (R)-pantothenate: step 1/5. This chain is Pantothenate kinase (coaA), found in Lactococcus lactis subsp. lactis (strain IL1403) (Streptococcus lactis).